The sequence spans 327 residues: Nucleotide-binding protein CYB_0992 (327 aa).

12–19 (GLTGAGKT) is an ATP binding site.

This sequence belongs to the RapZ-like family.

In terms of biological role, displays ATPase and GTPase activities. This Synechococcus sp. (strain JA-2-3B'a(2-13)) (Cyanobacteria bacterium Yellowstone B-Prime) protein is Nucleotide-binding protein CYB_0992.